The sequence spans 341 residues: MARVYREGDIGNEIAQKRIAVLGFGSQGHAHALNLRDSGCEVTVGLYRGSASWPKAEEAGLRVAEIPETVRWAEVVMMLLPDERQPPVFREQVAPNLAEGNLMLFAHGFNVHFNQVSVPPEVDLGLVAPKGPGHVLRSLYEEGKGMPALFAVGRDATGQARDLVLSYAKGIGCARAGVLETTFAEETETDLFGEQAVLCGGLSALLKAGFETLVEAGYQPELAYYECVNELKLIVDLIYEGGLARMRYSVSNTAEYGDYTAGPKVIDEGVRERMREILADIQSGRFAKEWVLENQAGGSSFLAMRRREAEHMVEKVGAELRALAAEGAQSPAGSPAGGESR.

Residues 1-181 (MARVYREGDI…GCARAGVLET (181 aa)) form the KARI N-terminal Rossmann domain. Residues 24-27 (FGSQ), S50, S52, and 82-85 (DERQ) each bind NADP(+). H107 is an active-site residue. G133 provides a ligand contact to NADP(+). Residues 182 to 327 (TFAEETETDL…AELRALAAEG (146 aa)) form the KARI C-terminal knotted domain. The Mg(2+) site is built by D190, E194, E226, and E230. S251 contacts substrate.

The protein belongs to the ketol-acid reductoisomerase family. The cofactor is Mg(2+).

It carries out the reaction (2R)-2,3-dihydroxy-3-methylbutanoate + NADP(+) = (2S)-2-acetolactate + NADPH + H(+). It catalyses the reaction (2R,3R)-2,3-dihydroxy-3-methylpentanoate + NADP(+) = (S)-2-ethyl-2-hydroxy-3-oxobutanoate + NADPH + H(+). It participates in amino-acid biosynthesis; L-isoleucine biosynthesis; L-isoleucine from 2-oxobutanoate: step 2/4. The protein operates within amino-acid biosynthesis; L-valine biosynthesis; L-valine from pyruvate: step 2/4. In terms of biological role, involved in the biosynthesis of branched-chain amino acids (BCAA). Catalyzes an alkyl-migration followed by a ketol-acid reduction of (S)-2-acetolactate (S2AL) to yield (R)-2,3-dihydroxy-isovalerate. In the isomerase reaction, S2AL is rearranged via a Mg-dependent methyl migration to produce 3-hydroxy-3-methyl-2-ketobutyrate (HMKB). In the reductase reaction, this 2-ketoacid undergoes a metal-dependent reduction by NADPH to yield (R)-2,3-dihydroxy-isovalerate. This chain is Ketol-acid reductoisomerase (NADP(+)), found in Rubrobacter xylanophilus (strain DSM 9941 / JCM 11954 / NBRC 16129 / PRD-1).